Consider the following 182-residue polypeptide: Orotate phosphoribosyltransferase (182 aa).

Residues Arg-93, Lys-94, Lys-97, and 119–127 (EDIATTGTS) each bind 5-phospho-alpha-D-ribose 1-diphosphate. Residues Thr-123 and Arg-151 each coordinate orotate.

It belongs to the purine/pyrimidine phosphoribosyltransferase family. PyrE subfamily. In terms of assembly, homodimer. Requires Mg(2+) as cofactor.

The catalysed reaction is orotidine 5'-phosphate + diphosphate = orotate + 5-phospho-alpha-D-ribose 1-diphosphate. It functions in the pathway pyrimidine metabolism; UMP biosynthesis via de novo pathway; UMP from orotate: step 1/2. In terms of biological role, catalyzes the transfer of a ribosyl phosphate group from 5-phosphoribose 1-diphosphate to orotate, leading to the formation of orotidine monophosphate (OMP). The polypeptide is Orotate phosphoribosyltransferase (Haloquadratum walsbyi (strain DSM 16790 / HBSQ001)).